The primary structure comprises 397 residues: Succinate--CoA ligase [ADP-forming] subunit beta (397 aa).

In terms of domain architecture, ATP-grasp spans 9–244 (KEIMKQYGIS…LTEEDPREVQ (236 aa)). Residues lysine 46, 53 to 55 (GRG), glutamate 99, leucine 102, and glutamate 107 each bind ATP. Mg(2+)-binding residues include asparagine 199 and aspartate 213. Substrate contacts are provided by residues asparagine 264 and 321 to 323 (GIM).

It belongs to the succinate/malate CoA ligase beta subunit family. Heterotetramer of two alpha and two beta subunits. The cofactor is Mg(2+).

The catalysed reaction is succinate + ATP + CoA = succinyl-CoA + ADP + phosphate. It carries out the reaction GTP + succinate + CoA = succinyl-CoA + GDP + phosphate. The protein operates within carbohydrate metabolism; tricarboxylic acid cycle; succinate from succinyl-CoA (ligase route): step 1/1. Its function is as follows. Succinyl-CoA synthetase functions in the citric acid cycle (TCA), coupling the hydrolysis of succinyl-CoA to the synthesis of either ATP or GTP and thus represents the only step of substrate-level phosphorylation in the TCA. The beta subunit provides nucleotide specificity of the enzyme and binds the substrate succinate, while the binding sites for coenzyme A and phosphate are found in the alpha subunit. In Alkaliphilus metalliredigens (strain QYMF), this protein is Succinate--CoA ligase [ADP-forming] subunit beta.